Here is a 397-residue protein sequence, read N- to C-terminus: Tryptophan synthase beta chain (397 aa).

Lys91 bears the N6-(pyridoxal phosphate)lysine mark.

Belongs to the TrpB family. Tetramer of two alpha and two beta chains. It depends on pyridoxal 5'-phosphate as a cofactor.

It catalyses the reaction (1S,2R)-1-C-(indol-3-yl)glycerol 3-phosphate + L-serine = D-glyceraldehyde 3-phosphate + L-tryptophan + H2O. Its pathway is amino-acid biosynthesis; L-tryptophan biosynthesis; L-tryptophan from chorismate: step 5/5. The beta subunit is responsible for the synthesis of L-tryptophan from indole and L-serine. The polypeptide is Tryptophan synthase beta chain (Bacillus cereus (strain Q1)).